Consider the following 342-residue polypeptide: Ribosomal RNA small subunit methyltransferase C (342 aa).

It belongs to the methyltransferase superfamily. RsmC family. As to quaternary structure, monomer.

It is found in the cytoplasm. It carries out the reaction guanosine(1207) in 16S rRNA + S-adenosyl-L-methionine = N(2)-methylguanosine(1207) in 16S rRNA + S-adenosyl-L-homocysteine + H(+). In terms of biological role, specifically methylates the guanine in position 1207 of 16S rRNA in the 30S particle. The protein is Ribosomal RNA small subunit methyltransferase C of Salmonella agona (strain SL483).